Here is an 86-residue protein sequence, read N- to C-terminus: Large ribosomal subunit protein uL30m (86 aa).

Positions 67-86 are disordered; the sequence is QQRELRKSNPGFIVEKRTID.

It belongs to the universal ribosomal protein uL30 family. Component of the mitochondrial large ribosomal subunit (mt-LSU). Mature yeast 74S mitochondrial ribosomes consist of a small (37S) and a large (54S) subunit. The 37S small subunit contains a 15S ribosomal RNA (15S mt-rRNA) and 34 different proteins. The 54S large subunit contains a 21S rRNA (21S mt-rRNA) and 46 different proteins.

It localises to the mitochondrion. Functionally, component of the mitochondrial ribosome (mitoribosome), a dedicated translation machinery responsible for the synthesis of mitochondrial genome-encoded proteins, including at least some of the essential transmembrane subunits of the mitochondrial respiratory chain. The mitoribosomes are attached to the mitochondrial inner membrane and translation products are cotranslationally integrated into the membrane. The chain is Large ribosomal subunit protein uL30m (MRPL33) from Saccharomyces cerevisiae (strain ATCC 204508 / S288c) (Baker's yeast).